Here is a 290-residue protein sequence, read N- to C-terminus: Undecaprenyl-diphosphatase (290 aa).

Helical transmembrane passes span Ile-5–Ile-25, Gly-44–Tyr-64, Val-88–Leu-108, Leu-122–Leu-142, Ile-152–Val-172, Phe-195–Leu-215, Pro-226–Leu-246, and Leu-255–Gly-275.

This sequence belongs to the UppP family.

It localises to the cell inner membrane. The enzyme catalyses di-trans,octa-cis-undecaprenyl diphosphate + H2O = di-trans,octa-cis-undecaprenyl phosphate + phosphate + H(+). Its function is as follows. Catalyzes the dephosphorylation of undecaprenyl diphosphate (UPP). Confers resistance to bacitracin. The sequence is that of Undecaprenyl-diphosphatase from Gloeobacter violaceus (strain ATCC 29082 / PCC 7421).